Consider the following 574-residue polypeptide: Excitatory amino acid transporter 2 (574 aa).

Topologically, residues 1-44 (MASTEGANNMPKQVEVRMHDSHLGSEEPKHRHLGLRLCDKLGKN) are cytoplasmic. Residues Ser3, Ser21, and Ser25 each carry the phosphoserine modification. A lipid anchor (S-palmitoyl cysteine) is attached at Cys38. A helical membrane pass occupies residues 45-64 (LLLTLTVFGVILGAVCGGLL). At 65–87 (RLASPIHPDVVMLIAFPGDILMR) the chain is on the extracellular side. A helical membrane pass occupies residues 88-108 (MLKMLILPLIISSLITGLSGL). The Cytoplasmic segment spans residues 109-120 (DAKASGRLGTRA). A helical membrane pass occupies residues 121–142 (MVYYMSTTIIAAVLGVILVLAI). Over 143–235 (HPGNPKLKKQ…TKMVIKKGLE (93 aa)) the chain is Extracellular. Asn206 and Asn216 each carry an N-linked (GlcNAc...) asparagine glycan. The chain crosses the membrane as a helical span at residues 236–259 (FKDGMNVLGLIGFFIAFGIAMGKM). Topologically, residues 260-268 (GDQAKLMVD) are cytoplasmic. Residues 269-296 (FFNILNEIVMKLVIMIMWYSPLGIACLI) traverse the membrane as a helical segment. The Extracellular segment spans residues 297–317 (CGKIIAIKDLEVVARQLGMYM). The helical transmembrane segment at 318–339 (VTVIIGLIIHGGIFLPLIYFVV) threads the bilayer. Over 340–344 (TRKNP) the chain is Cytoplasmic. Residues 345–375 (FSFFAGIFQAWITALGTASSAGTLPVTFRCL) constitute an intramembrane region (discontinuously helical). 362-364 (ASS) contributes to the L-aspartate binding site. At 376–384 (EENLGIDKR) the chain is on the cytoplasmic side. The helical transmembrane segment at 385–411 (VTRFVLPVGATINMDGTALYEAVAAIF) threads the bilayer. 3 residues coordinate Na(+): Gly393, Thr395, and Asn397. Position 401 (Thr401) interacts with L-aspartate. Residues 412-424 (IAQMNGVVLDGGQ) lie on the Extracellular side of the membrane. Residues 425–458 (IVTVSLTATLASVGAASIPSAGLVTMLLILTAVG) constitute an intramembrane region (discontinuously helical). 442–446 (IPSAG) contacts L-aspartate. The Extracellular portion of the chain corresponds to 459–471 (LPTEDISLLVAVD). Residues 472-493 (WLLDRMRTSVNVVGDSFGAGIV) traverse the membrane as a helical segment. L-aspartate is bound by residues Asp475 and Asn482. The Na(+) site is built by Asn482 and Asp486. The Cytoplasmic segment spans residues 494 to 574 (YHLSKSELDT…VEEEPWKREK (81 aa)). Phosphoserine is present on residues Ser506, Ser521, Ser532, and Ser534. Position 539 is a phosphotyrosine (Tyr539). 3 positions are modified to phosphoserine: Ser544, Ser560, and Ser564.

It belongs to the dicarboxylate/amino acid:cation symporter (DAACS) (TC 2.A.23) family. SLC1A2 subfamily. In terms of assembly, homotrimer. Isoform 3 can oligomerize with isoform 1. Interacts with AJUBA. Post-translationally, glycosylated. In terms of processing, palmitoylation at Cys-38 is not required for correct subcellular localization, but is important for glutamate uptake activity.

The protein localises to the cell membrane. The catalysed reaction is K(+)(in) + L-glutamate(out) + 3 Na(+)(out) + H(+)(out) = K(+)(out) + L-glutamate(in) + 3 Na(+)(in) + H(+)(in). It catalyses the reaction K(+)(in) + L-aspartate(out) + 3 Na(+)(out) + H(+)(out) = K(+)(out) + L-aspartate(in) + 3 Na(+)(in) + H(+)(in). It carries out the reaction D-aspartate(out) + K(+)(in) + 3 Na(+)(out) + H(+)(out) = D-aspartate(in) + K(+)(out) + 3 Na(+)(in) + H(+)(in). Its function is as follows. Sodium-dependent, high-affinity amino acid transporter that mediates the uptake of L-glutamate and also L-aspartate and D-aspartate. Functions as a symporter that transports one amino acid molecule together with two or three Na(+) ions and one proton, in parallel with the counter-transport of one K(+) ion. Mediates Cl(-) flux that is not coupled to amino acid transport; this avoids the accumulation of negative charges due to aspartate and Na(+) symport. Essential for the rapid removal of released glutamate from the synaptic cleft, and for terminating the postsynaptic action of glutamate. This is Excitatory amino acid transporter 2 from Homo sapiens (Human).